Here is an 897-residue protein sequence, read N- to C-terminus: Translation initiation factor IF-2 (897 aa).

2 disordered regions span residues 69–88 (RKTKSTISVQGTGGKNKEVQ) and 95–304 (RTYV…NAMK). A compositionally biased stretch (basic and acidic residues) spans 101–161 (SALEDEQRQA…EEKARIEAQQ (61 aa)). Positions 162-179 (KARQAQQPAKAAGSTAQQ) are enriched in low complexity. Composition is skewed to basic and acidic residues over residues 180 to 196 (EAEKMAKREAEELKRQQ), 203 to 217 (KAEELAAKKAEEARV), 226 to 239 (WAEEEAARAKESSD), and 277 to 286 (RREDDRDARN). Residues 287–296 (PRARKGKRGK) show a composition bias toward basic residues. The 170-residue stretch at 397–566 (PRAPVVTIMG…LIQSEVLELK (170 aa)) folds into the tr-type G domain. Residues 406 to 413 (GHVDHGKT) form a G1 region. 406-413 (GHVDHGKT) contacts GTP. The interval 431–435 (GITQH) is G2. The segment at 452-455 (DTPG) is G3. GTP contacts are provided by residues 452–456 (DTPGH) and 506–509 (NKID). Positions 506–509 (NKID) are G4. The interval 542-544 (SAK) is G5.

Belongs to the TRAFAC class translation factor GTPase superfamily. Classic translation factor GTPase family. IF-2 subfamily.

Its subcellular location is the cytoplasm. In terms of biological role, one of the essential components for the initiation of protein synthesis. Protects formylmethionyl-tRNA from spontaneous hydrolysis and promotes its binding to the 30S ribosomal subunits. Also involved in the hydrolysis of GTP during the formation of the 70S ribosomal complex. The polypeptide is Translation initiation factor IF-2 (Aeromonas hydrophila subsp. hydrophila (strain ATCC 7966 / DSM 30187 / BCRC 13018 / CCUG 14551 / JCM 1027 / KCTC 2358 / NCIMB 9240 / NCTC 8049)).